Reading from the N-terminus, the 211-residue chain is uncharacterized protein (211 aa).

Helical transmembrane passes span 22-42, 111-131, and 133-153; these read FINF…GLKV, IIGA…WFPV, and GMAG…FMIT.

To E.coli YkgB. This sequence to H.influenzae HI_0219.

Its subcellular location is the cell membrane. This is an uncharacterized protein from Mannheimia haemolytica (Pasteurella haemolytica).